A 344-amino-acid polypeptide reads, in one-letter code: Phenylalanine--tRNA ligase alpha subunit (344 aa).

Residue E256 participates in Mg(2+) binding.

The protein belongs to the class-II aminoacyl-tRNA synthetase family. Phe-tRNA synthetase alpha subunit type 1 subfamily. As to quaternary structure, tetramer of two alpha and two beta subunits. Mg(2+) serves as cofactor.

It is found in the cytoplasm. It carries out the reaction tRNA(Phe) + L-phenylalanine + ATP = L-phenylalanyl-tRNA(Phe) + AMP + diphosphate + H(+). This is Phenylalanine--tRNA ligase alpha subunit (pheS) from Bacillus subtilis (strain 168).